The chain runs to 303 residues: Acidic endochitinase WIN6.2B (303 aa).

The signal sequence occupies residues 1–21 (MSVWAFAFFSLFLSLSVRGSA). The Chitin-binding type-1 domain maps to 22–62 (EQCGQQAGDALCPGGLCCSSYGWCGTTADYCGDGCQSQCDG). 4 cysteine pairs are disulfide-bonded: Cys-24-Cys-39, Cys-33-Cys-45, Cys-38-Cys-52, and Cys-56-Cys-60. The segment at 82 to 303 (DGYLSDIIPE…YGLLGLKDTM (222 aa)) is chitinase. Glu-150 acts as the Proton donor in catalysis. Residues Cys-253 and Cys-286 are joined by a disulfide bond.

Belongs to the glycosyl hydrolase 19 family. Chitinase class I subfamily.

The enzyme catalyses Random endo-hydrolysis of N-acetyl-beta-D-glucosaminide (1-&gt;4)-beta-linkages in chitin and chitodextrins.. Functionally, defense against chitin-containing fungal pathogens. The chain is Acidic endochitinase WIN6.2B from Populus trichocarpa (Western balsam poplar).